We begin with the raw amino-acid sequence, 794 residues long: Sucrose synthase (794 aa).

A GT-B glycosyltransferase region spans residues 263 to 742 (MISRLLILSP…ALDRVASRYT (480 aa)).

The protein belongs to the glycosyltransferase 1 family. Homotetramer.

The enzyme catalyses an NDP-alpha-D-glucose + D-fructose = a ribonucleoside 5'-diphosphate + sucrose + H(+). It carries out the reaction ADP-alpha-D-glucose + D-fructose = sucrose + ADP + H(+). Its activity is regulated as follows. Inhibited by GDP over 10 mM and by over 2 mM MgCl(2). Functionally, catalyzes the reversible conversion of sucrose and a nucleotide disphosphate (NDP) into fructose and NDP-glucose; although the reaction is freely reversible in vitro, the physiological reaction seems to be sucrose cleavage. Unlike characterized plant enzymes prefers ADP as a cosubstrate, whereas plants prefer UDP. The KM for sucrose is 8-fold lower in the presence of ADP than UDP. Its preference for ADP over UDP suggests it may directly link sucrose and glycogen metabolism. The protein is Sucrose synthase (ss2) of Nitrosomonas europaea (strain ATCC 19718 / CIP 103999 / KCTC 2705 / NBRC 14298).